The primary structure comprises 274 residues: MADPMGGAGRLPAVFMTPGTSSFTDFLSQSAPHLLPGARGGLPGPVTEVAHGTTIVAVTFPGGVIMAGDRRATQGHMIAQRDVEKVHHADDFSCVGYAGTAGVGAELIRLFQVELEHYEKIEGATLSLDAKANRLAAMVKGNLPMALQGLAVVPLFAGYDPDLDKGRIFSYDIAAAKSEERTYESIGSGSVFAKGSLKKRFRVDLTQDDAVRIAVEALYDAADDDSATGGPDTIRKLYPIVASVTSDGYRRYGDDEVEPVVTAIIADRSTSAGG.

Residues 1–52 (MADPMGGAGRLPAVFMTPGTSSFTDFLSQSAPHLLPGARGGLPGPVTEVAHG) constitute a propeptide, removed in mature form; by autocatalysis. T53 serves as the catalytic Nucleophile.

This sequence belongs to the peptidase T1B family. As to quaternary structure, the 20S proteasome core is composed of 14 alpha and 14 beta subunits that assemble into four stacked heptameric rings, resulting in a barrel-shaped structure. The two inner rings, each composed of seven catalytic beta subunits, are sandwiched by two outer rings, each composed of seven alpha subunits. The catalytic chamber with the active sites is on the inside of the barrel. Has a gated structure, the ends of the cylinder being occluded by the N-termini of the alpha-subunits. Is capped by the proteasome-associated ATPase, ARC.

It is found in the cytoplasm. The enzyme catalyses Cleavage of peptide bonds with very broad specificity.. It functions in the pathway protein degradation; proteasomal Pup-dependent pathway. Its activity is regulated as follows. The formation of the proteasomal ATPase ARC-20S proteasome complex, likely via the docking of the C-termini of ARC into the intersubunit pockets in the alpha-rings, may trigger opening of the gate for substrate entry. Interconversion between the open-gate and close-gate conformations leads to a dynamic regulation of the 20S proteasome proteolysis activity. Functionally, component of the proteasome core, a large protease complex with broad specificity involved in protein degradation. The sequence is that of Proteasome subunit beta from Frankia alni (strain DSM 45986 / CECT 9034 / ACN14a).